We begin with the raw amino-acid sequence, 353 residues long: Ferredoxin--NADP reductase 1 (353 aa).

The FAD site is built by Asp43, Gln51, Tyr56, Ala96, Phe135, Asp300, and Ser341.

This sequence belongs to the ferredoxin--NADP reductase type 2 family. Homodimer. It depends on FAD as a cofactor.

It catalyses the reaction 2 reduced [2Fe-2S]-[ferredoxin] + NADP(+) + H(+) = 2 oxidized [2Fe-2S]-[ferredoxin] + NADPH. This Cupriavidus metallidurans (strain ATCC 43123 / DSM 2839 / NBRC 102507 / CH34) (Ralstonia metallidurans) protein is Ferredoxin--NADP reductase 1.